Reading from the N-terminus, the 223-residue chain is Endonuclease NucS (223 aa).

It belongs to the NucS endonuclease family.

The protein resides in the cytoplasm. Functionally, cleaves both 3' and 5' ssDNA extremities of branched DNA structures. This chain is Endonuclease NucS, found in Mycolicibacterium gilvum (strain PYR-GCK) (Mycobacterium gilvum (strain PYR-GCK)).